A 202-amino-acid polypeptide reads, in one-letter code: Probable chemoreceptor glutamine deamidase CheD 2 (202 aa).

This sequence belongs to the CheD family.

The catalysed reaction is L-glutaminyl-[protein] + H2O = L-glutamyl-[protein] + NH4(+). In terms of biological role, probably deamidates glutamine residues to glutamate on methyl-accepting chemotaxis receptors (MCPs), playing an important role in chemotaxis. This chain is Probable chemoreceptor glutamine deamidase CheD 2, found in Shewanella oneidensis (strain ATCC 700550 / JCM 31522 / CIP 106686 / LMG 19005 / NCIMB 14063 / MR-1).